The sequence spans 415 residues: Gamma-glutamyl phosphate reductase (415 aa).

It belongs to the gamma-glutamyl phosphate reductase family.

It localises to the cytoplasm. It carries out the reaction L-glutamate 5-semialdehyde + phosphate + NADP(+) = L-glutamyl 5-phosphate + NADPH + H(+). Its pathway is amino-acid biosynthesis; L-proline biosynthesis; L-glutamate 5-semialdehyde from L-glutamate: step 2/2. Functionally, catalyzes the NADPH-dependent reduction of L-glutamate 5-phosphate into L-glutamate 5-semialdehyde and phosphate. The product spontaneously undergoes cyclization to form 1-pyrroline-5-carboxylate. The chain is Gamma-glutamyl phosphate reductase from Dictyoglomus thermophilum (strain ATCC 35947 / DSM 3960 / H-6-12).